The chain runs to 343 residues: Heat-inducible transcription repressor HrcA (343 aa).

This sequence belongs to the HrcA family.

Its function is as follows. Negative regulator of class I heat shock genes (grpE-dnaK-dnaJ and groELS operons). Prevents heat-shock induction of these operons. This Clostridium botulinum (strain Alaska E43 / Type E3) protein is Heat-inducible transcription repressor HrcA.